A 370-amino-acid polypeptide reads, in one-letter code: Probable trehalose-phosphate phosphatase J (370 aa).

The protein belongs to the trehalose phosphatase family. A divalent metal cation is required as a cofactor.

The enzyme catalyses alpha,alpha-trehalose 6-phosphate + H2O = alpha,alpha-trehalose + phosphate. It functions in the pathway glycan biosynthesis; trehalose biosynthesis. Its function is as follows. Removes the phosphate from trehalose 6-phosphate to produce free trehalose. Trehalose accumulation in plant may improve abiotic stress tolerance. The chain is Probable trehalose-phosphate phosphatase J (TPPJ) from Arabidopsis thaliana (Mouse-ear cress).